The primary structure comprises 361 residues: Protein RecA (361 aa).

An ATP-binding site is contributed by 77–84 (GPESSGKT).

This sequence belongs to the RecA family.

The protein localises to the cytoplasm. Its function is as follows. Can catalyze the hydrolysis of ATP in the presence of single-stranded DNA, the ATP-dependent uptake of single-stranded DNA by duplex DNA, and the ATP-dependent hybridization of homologous single-stranded DNAs. It interacts with LexA causing its activation and leading to its autocatalytic cleavage. This Rhizobium etli protein is Protein RecA.